Here is a 445-residue protein sequence, read N- to C-terminus: Probable fructoselysine/psicoselysine transporter FrlA (445 aa).

11 helical membrane passes run 10-32 (LGFWAVLAIAVGTTVGSGIFVSV), 39-61 (AGTPWLTVLAFVIGGLIVIPQMC), 97-119 (FWANDAPSLSIMALAIVSNLGFL), 126-143 (LGKFIAAGLIIAFMLLHL), 153-175 (QTLITIAKIIPFTIVIGLGIFWF), 188-210 (IGATGSFMALLAGISATSWSYTG), 230-252 (RALIGSCLLVLVLYTLLALVISG), 272-294 (WIPALGSTAGIFVAITAMIVILG), 341-363 (GIFFIFVSDLTSLLGYFTLVMCF), 384-406 (LWRTPAFGLMTPLAIASSLILVA), and 411-433 (WAPIPGLICAVIVIATGLPAYAF).

Belongs to the amino acid-polyamine-organocation (APC) superfamily.

The protein localises to the cell inner membrane. The enzyme catalyses N(6)-(D-fructosyl)-L-lysine(in) = N(6)-(D-fructosyl)-L-lysine(out). The catalysed reaction is N(6)-(D-psicosyl)-L-lysine(in) = N(6)-(D-psicosyl)-L-lysine(out). It participates in carbohydrate metabolism; fructoselysine degradation. In terms of biological role, is likely involved in the transport of fructoselysine and psicoselysine to the cytoplasm, where they are degraded. This chain is Probable fructoselysine/psicoselysine transporter FrlA (frlA), found in Escherichia coli O157:H7.